The following is a 273-amino-acid chain: SUMO-1 cysteine protease S273R (273 aa).

Residues His168 and Asn187 contribute to the active site. Substrate is bound at residue Gln226. Residue Cys232 is the Nucleophile of the active site.

The protein belongs to the peptidase C63 family.

It is found in the host cytoplasm. The protein resides in the virion. Cysteine protease that plays several role during infection including processing of the structural polyprotein or inhibition of the host immune response. Catalyzes the maturation of the pp220 and pp62 polyprotein precursors into core-shell proteins. Plays a role in the disruption of host pyroptosis via specific cleavage of gasdermin D/GSDMD. In addition, strongly decreases the host cGAS-STING signaling by targeting IKBKE via its enzymatic activity. Also impairs host FOXJ1-mediated antiviral effect via degradation of FOXJ1. This is SUMO-1 cysteine protease S273R from Ornithodoros (relapsing fever ticks).